Here is a 712-residue protein sequence, read N- to C-terminus: Polyribonucleotide nucleotidyltransferase (712 aa).

Mg(2+) is bound by residues aspartate 487 and aspartate 493. The region spanning 554–613 (PKIITMTINPDKIRDVIGPSGKQINKIIEETGVKIDIEQDGTVFISSINQEMNDKAKKII) is the KH domain. An S1 motif domain is found at 623-691 (GEIYEGKVKR…KQGRVNLSRK (69 aa)).

This sequence belongs to the polyribonucleotide nucleotidyltransferase family. Mg(2+) serves as cofactor.

The protein resides in the cytoplasm. It catalyses the reaction RNA(n+1) + phosphate = RNA(n) + a ribonucleoside 5'-diphosphate. Its function is as follows. Involved in mRNA degradation. Catalyzes the phosphorolysis of single-stranded polyribonucleotides processively in the 3'- to 5'-direction. In Bacillus cereus (strain AH187), this protein is Polyribonucleotide nucleotidyltransferase.